A 335-amino-acid chain; its full sequence is Anthranilate phosphoribosyltransferase (335 aa).

5-phospho-alpha-D-ribose 1-diphosphate contacts are provided by residues Gly-79, 82 to 83, Ser-87, 89 to 92, 107 to 115, and Ser-119; these read GD, NIST, and KHGNRSISS. Gly-79 serves as a coordination point for anthranilate. Residue Ser-91 coordinates Mg(2+). Asn-110 is a binding site for anthranilate. Arg-165 contacts anthranilate. Mg(2+)-binding residues include Asp-224 and Glu-225.

It belongs to the anthranilate phosphoribosyltransferase family. As to quaternary structure, homodimer. The cofactor is Mg(2+).

It carries out the reaction N-(5-phospho-beta-D-ribosyl)anthranilate + diphosphate = 5-phospho-alpha-D-ribose 1-diphosphate + anthranilate. It participates in amino-acid biosynthesis; L-tryptophan biosynthesis; L-tryptophan from chorismate: step 2/5. Its function is as follows. Catalyzes the transfer of the phosphoribosyl group of 5-phosphorylribose-1-pyrophosphate (PRPP) to anthranilate to yield N-(5'-phosphoribosyl)-anthranilate (PRA). In Streptococcus mutans serotype c (strain ATCC 700610 / UA159), this protein is Anthranilate phosphoribosyltransferase.